Here is a 219-residue protein sequence, read N- to C-terminus: 2-C-methyl-D-erythritol 4-phosphate cytidylyltransferase (219 aa).

It belongs to the IspD/TarI cytidylyltransferase family. IspD subfamily.

The catalysed reaction is 2-C-methyl-D-erythritol 4-phosphate + CTP + H(+) = 4-CDP-2-C-methyl-D-erythritol + diphosphate. It functions in the pathway isoprenoid biosynthesis; isopentenyl diphosphate biosynthesis via DXP pathway; isopentenyl diphosphate from 1-deoxy-D-xylulose 5-phosphate: step 2/6. In terms of biological role, catalyzes the formation of 4-diphosphocytidyl-2-C-methyl-D-erythritol from CTP and 2-C-methyl-D-erythritol 4-phosphate (MEP). In Chlamydia trachomatis serovar D (strain ATCC VR-885 / DSM 19411 / UW-3/Cx), this protein is 2-C-methyl-D-erythritol 4-phosphate cytidylyltransferase.